The chain runs to 338 residues: Glycerol-3-phosphate dehydrogenase [NAD(P)+] (338 aa).

Residues Trp11, Arg30, and Lys109 each contribute to the NADPH site. Residues Lys109, Gly143, and Ser145 each coordinate sn-glycerol 3-phosphate. Ala147 contacts NADPH. 5 residues coordinate sn-glycerol 3-phosphate: Lys198, Asp251, Ser261, Arg262, and Asn263. Catalysis depends on Lys198, which acts as the Proton acceptor. Arg262 contacts NADPH. Residues Val286 and Glu288 each coordinate NADPH.

The protein belongs to the NAD-dependent glycerol-3-phosphate dehydrogenase family.

Its subcellular location is the cytoplasm. The catalysed reaction is sn-glycerol 3-phosphate + NAD(+) = dihydroxyacetone phosphate + NADH + H(+). It carries out the reaction sn-glycerol 3-phosphate + NADP(+) = dihydroxyacetone phosphate + NADPH + H(+). Its pathway is membrane lipid metabolism; glycerophospholipid metabolism. Its function is as follows. Catalyzes the reduction of the glycolytic intermediate dihydroxyacetone phosphate (DHAP) to sn-glycerol 3-phosphate (G3P), the key precursor for phospholipid synthesis. This Cupriavidus necator (strain ATCC 17699 / DSM 428 / KCTC 22496 / NCIMB 10442 / H16 / Stanier 337) (Ralstonia eutropha) protein is Glycerol-3-phosphate dehydrogenase [NAD(P)+].